A 314-amino-acid polypeptide reads, in one-letter code: MASNLRELRERRNSVATTKKITRAMELIASSRIIKAQNTVKAAGPYSLELTRALSAVAAHTHEEHPLTSMNPDPKRSAVLVITSDRGLAGAYSSNVIRTAEELTTALQPKQEIATYLCGRKAVQYFEFRGRKVDHLWSGFSDSPSYRDAKDIADHLIEDFLRPTEEGGVDEIHMVYTEFESMLTQTPKVIRLLPLAVVDPQDTPEGQLAEGDPGVGANAEEIFHEYRFEPNPVSVLDELLPLYVANRVHYALLQSAASELASRQRAMKAATDNAEQLIQTLTRQANQARQAAITQEITEIVGGAAALAESAPQE.

Belongs to the ATPase gamma chain family. F-type ATPases have 2 components, CF(1) - the catalytic core - and CF(0) - the membrane proton channel. CF(1) has five subunits: alpha(3), beta(3), gamma(1), delta(1), epsilon(1). CF(0) has three main subunits: a, b and c.

The protein localises to the cell membrane. Produces ATP from ADP in the presence of a proton gradient across the membrane. The gamma chain is believed to be important in regulating ATPase activity and the flow of protons through the CF(0) complex. The sequence is that of ATP synthase gamma chain from Cutibacterium acnes (strain DSM 16379 / KPA171202) (Propionibacterium acnes).